The primary structure comprises 178 residues: Small ribosomal subunit protein uS5 (178 aa).

Residues 17-80 (FEERIVEIRR…AAARASVVEI (64 aa)) enclose the S5 DRBM domain.

The protein belongs to the universal ribosomal protein uS5 family. Part of the 30S ribosomal subunit. Contacts proteins S4 and S8.

Its function is as follows. With S4 and S12 plays an important role in translational accuracy. In terms of biological role, located at the back of the 30S subunit body where it stabilizes the conformation of the head with respect to the body. The chain is Small ribosomal subunit protein uS5 from Pseudothermotoga lettingae (strain ATCC BAA-301 / DSM 14385 / NBRC 107922 / TMO) (Thermotoga lettingae).